The chain runs to 54 residues: UPF0391 membrane protein BAB1_1670 (54 aa).

The next 2 helical transmembrane spans lie at 5–25 (VLVFLVVALVAGALGFGGIAG) and 29–48 (GIAQILFFVFLALLVISLIA).

This sequence belongs to the UPF0391 family.

Its subcellular location is the cell membrane. In Brucella abortus (strain 2308), this protein is UPF0391 membrane protein BAB1_1670.